Consider the following 374-residue polypeptide: Anhydro-N-acetylmuramic acid kinase (374 aa).

12 to 19 lines the ATP pocket; that stretch reads GTSLDGID.

It belongs to the anhydro-N-acetylmuramic acid kinase family.

The enzyme catalyses 1,6-anhydro-N-acetyl-beta-muramate + ATP + H2O = N-acetyl-D-muramate 6-phosphate + ADP + H(+). The protein operates within amino-sugar metabolism; 1,6-anhydro-N-acetylmuramate degradation. It functions in the pathway cell wall biogenesis; peptidoglycan recycling. In terms of biological role, catalyzes the specific phosphorylation of 1,6-anhydro-N-acetylmuramic acid (anhMurNAc) with the simultaneous cleavage of the 1,6-anhydro ring, generating MurNAc-6-P. Is required for the utilization of anhMurNAc either imported from the medium or derived from its own cell wall murein, and thus plays a role in cell wall recycling. The chain is Anhydro-N-acetylmuramic acid kinase from Sodalis glossinidius (strain morsitans).